The sequence spans 118 residues: Small ribosomal subunit protein uS13 (118 aa).

A disordered region spans residues 93-118 (RNLPVRGQNTKNNARTRKGPTRPLKR). Residues 106–118 (ARTRKGPTRPLKR) are compositionally biased toward basic residues.

This sequence belongs to the universal ribosomal protein uS13 family. Part of the 30S ribosomal subunit. Forms a loose heterodimer with protein S19. Forms two bridges to the 50S subunit in the 70S ribosome.

Functionally, located at the top of the head of the 30S subunit, it contacts several helices of the 16S rRNA. In the 70S ribosome it contacts the 23S rRNA (bridge B1a) and protein L5 of the 50S subunit (bridge B1b), connecting the 2 subunits; these bridges are implicated in subunit movement. Contacts the tRNAs in the A and P-sites. The protein is Small ribosomal subunit protein uS13 of Psychrobacter cryohalolentis (strain ATCC BAA-1226 / DSM 17306 / VKM B-2378 / K5).